Consider the following 898-residue polypeptide: Protein translocase subunit SecA (898 aa).

Residues Gln-87, 105-109, and Asp-512 each bind ATP; that span reads GEGKT. Polar residues predominate over residues 855–865; that stretch reads MQYQNNEGTSS. The tract at residues 855-898 is disordered; sequence MQYQNNEGTSSLHEKSEHKIGRNESCPCGSGKKYKHCHGSKAKY. Positions 866 to 876 are enriched in basic and acidic residues; it reads LHEKSEHKIGR. The Zn(2+) site is built by Cys-880, Cys-882, Cys-891, and His-892. Basic residues predominate over residues 886-898; the sequence is KKYKHCHGSKAKY.

It belongs to the SecA family. Monomer and homodimer. Part of the essential Sec protein translocation apparatus which comprises SecA, SecYEG and auxiliary proteins SecDF-YajC and YidC. Requires Zn(2+) as cofactor.

It localises to the cell inner membrane. Its subcellular location is the cytoplasm. The catalysed reaction is ATP + H2O + cellular proteinSide 1 = ADP + phosphate + cellular proteinSide 2.. Functionally, part of the Sec protein translocase complex. Interacts with the SecYEG preprotein conducting channel. Has a central role in coupling the hydrolysis of ATP to the transfer of proteins into and across the cell membrane, serving both as a receptor for the preprotein-SecB complex and as an ATP-driven molecular motor driving the stepwise translocation of polypeptide chains across the membrane. This chain is Protein translocase subunit SecA, found in Histophilus somni (strain 2336) (Haemophilus somnus).